The following is a 323-amino-acid chain: L-lactate dehydrogenase (323 aa).

Residues V18, D39, Y69, and G83–A84 each bind NAD(+). Substrate contacts are provided by Q86 and R92. Residues S105, V122–N124, and S147 each bind NAD(+). A substrate-binding site is contributed by N124 to D127. D152–R155 serves as a coordination point for substrate. The Proton acceptor role is filled by H179. Residue Y223 is modified to Phosphotyrosine. T232 is a binding site for substrate.

The protein belongs to the LDH/MDH superfamily. LDH family. As to quaternary structure, homotetramer.

The protein resides in the cytoplasm. It carries out the reaction (S)-lactate + NAD(+) = pyruvate + NADH + H(+). Its pathway is fermentation; pyruvate fermentation to lactate; (S)-lactate from pyruvate: step 1/1. Under neutral conditions, the reaction is stimulated 4-fold by fructose 1,6-bisphosphate (FBP), however the L-lactate dehydrogenase is a nonallosteric enzyme. Calcium and zinc ions at 1 mM stimulate the activity almost 2-fold. Weakly inhibited by cadmium, cobalt and copper ions. Catalyzes the conversion of lactate to pyruvate. The polypeptide is L-lactate dehydrogenase (Lactobacillus helveticus (Lactobacillus suntoryeus)).